Here is a 317-residue protein sequence, read N- to C-terminus: Melanocyte-stimulating hormone receptor (317 aa).

At 1–37 (MAVQGFQRRLLGSLNSTPTAIPQLGLAANQTGARCLE) the chain is on the extracellular side. Residue N29 is glycosylated (N-linked (GlcNAc...) asparagine). Residues 38–63 (VSIPDGLFLSLGLVSLVENVLVVATI) traverse the membrane as a helical segment. Topologically, residues 64-72 (AKNRNLHSP) are cytoplasmic. Residues 73-93 (TYCFICCLALSDLLVSGGNVL) form a helical membrane-spanning segment. Over 94–118 (ETVVILLLEASALAARAAVVQPLDN) the chain is Extracellular. Residues 119–140 (VIDVITCSSMVSSLCFLGAIAM) traverse the membrane as a helical segment. The Cytoplasmic portion of the chain corresponds to 141-163 (DRYVSIFYALRYHSIVTLPRARQ). The chain crosses the membrane as a helical span at residues 164–183 (AIAAIWVASVLFSTLFIAYY). Residues 184 to 191 (DHAAVLLC) lie on the Extracellular side of the membrane. The chain crosses the membrane as a helical span at residues 192–211 (LVVFFLAMLVLMAVLYVHML). At 212 to 240 (ARACQHAQGIARLHKRQRPLHQGFGLKGA) the chain is on the cytoplasmic side. Residues 241–266 (VTLTILLGIFFLCWGPFFLHLTLIVL) traverse the membrane as a helical segment. Over 267–279 (CPQHPTCSCIFKN) the chain is Extracellular. A helical transmembrane segment spans residues 280 to 300 (FNLFLTLIICNAIIDPLIYAF). The Cytoplasmic portion of the chain corresponds to 301-317 (RRQELRRTLKEGLTCSW). A lipid anchor (S-palmitoyl cysteine) is attached at C315.

The protein belongs to the G-protein coupled receptor 1 family. Interacts with MGRN1, but does not undergo MGRN1-mediated ubiquitination; this interaction competes with GNAS-binding and thus inhibits agonist-induced cAMP production. Interacts with OPN3; the interaction results in a decrease in MC1R-mediated cAMP signaling and ultimately a decrease in melanin production in melanocytes.

It localises to the cell membrane. Receptor for MSH (alpha, beta and gamma) and ACTH. The activity of this receptor is mediated by G proteins which activate adenylate cyclase. Mediates melanogenesis, the production of eumelanin (black/brown) and phaeomelanin (red/yellow), via regulation of cAMP signaling in melanocytes. This Hylobates lar (Lar gibbon) protein is Melanocyte-stimulating hormone receptor (MC1R).